The following is a 233-amino-acid chain: C-type lectin domain family 2 member D5 (233 aa).

Residues M1–I52 are disordered. Residues M1 to C76 are Cytoplasmic-facing. Residues R16–Q29 show a composition bias toward polar residues. Positions S30 to S50 are enriched in low complexity. Residues C77 to V97 traverse the membrane as a helical; Signal-anchor for type II membrane protein segment. Residues K98 to L233 lie on the Extracellular side of the membrane. A C-type lectin domain is found at V119–Y228. Residue N132 is glycosylated (N-linked (GlcNAc...) asparagine).

It is found in the cell membrane. Functionally, lectin-type cell surface receptor. This Rattus norvegicus (Rat) protein is C-type lectin domain family 2 member D5 (Ocil).